Reading from the N-terminus, the 212-residue chain is Uracil phosphoribosyltransferase (212 aa).

5-phospho-alpha-D-ribose 1-diphosphate contacts are provided by residues Arg78, Arg103, and 130-138 (DPMLATGGS). Uracil contacts are provided by residues Ile193 and 198–200 (GDA). A 5-phospho-alpha-D-ribose 1-diphosphate-binding site is contributed by Asp199.

This sequence belongs to the UPRTase family. The cofactor is Mg(2+).

It catalyses the reaction UMP + diphosphate = 5-phospho-alpha-D-ribose 1-diphosphate + uracil. It functions in the pathway pyrimidine metabolism; UMP biosynthesis via salvage pathway; UMP from uracil: step 1/1. Allosterically activated by GTP. Its function is as follows. Catalyzes the conversion of uracil and 5-phospho-alpha-D-ribose 1-diphosphate (PRPP) to UMP and diphosphate. The chain is Uracil phosphoribosyltransferase from Pseudomonas paraeruginosa (strain DSM 24068 / PA7) (Pseudomonas aeruginosa (strain PA7)).